Reading from the N-terminus, the 115-residue chain is uncharacterized protein (115 aa).

3 helical membrane-spanning segments follow: residues L23 to A43, A63 to V83, and N90 to A110.

The protein resides in the cell membrane. This is an uncharacterized protein from Mycobacterium bovis (strain ATCC BAA-935 / AF2122/97).